The sequence spans 151 residues: RNA polymerase-binding transcription factor DksA (151 aa).

A coiled-coil region spans residues 33–54 (NEAQLAHFRRILEAWRNQLRDE). Positions 114, 117, 135, and 138 each coordinate Zn(2+). The segment at 114–138 (CESCGVEIGIRRLEARPTADLCIDC) adopts a dksA C4-type zinc-finger fold.

This sequence belongs to the DksA family. As to quaternary structure, interacts directly with the RNA polymerase.

It is found in the cytoplasm. Functionally, transcription factor that acts by binding directly to the RNA polymerase (RNAP). Required for negative regulation of rRNA expression and positive regulation of several amino acid biosynthesis promoters. Also required for regulation of fis expression. The polypeptide is RNA polymerase-binding transcription factor DksA (Escherichia coli O157:H7).